The following is a 163-amino-acid chain: Bacterial ISG15-like ubiquitin-like protein BilA (163 aa).

2 consecutive Ubiquitin-like BIL-type domains span residues 4-80 and 81-163; these read LVVF…RCKR and IRAT…RIEG. Residue G163 forms a Glycyl lysine isopeptide (Gly-Lys) (interchain with K-? in central tail fiber acceptor protein) linkage.

Component of the Bil (bacterial ISG15-like) antiviral defense system, composed of BilA, BilB, BilC and BilD. The Bil system specifically conjugates a ubiquitin-like moiety (bilA) to the bacteriophage central tail fiber (CTF, or tip attachment protein J) via reactions involving E1 (bilD) and E2 (bilB). Modifies CTF of phage SECphi27 and SECphi4, which probably interferes with assembly of the phage tail. Also modifies T5 baseplate hub protein pb3 (gene D16), but not gp27 of phage T6 (Bil defends against T6). Bil-encoding bacteria produce mostly defective phage SECphi27, many of which have phage assembly defects, including no tails. SECphi27 phage progeny produced in E.coli with the Bil system inject less DNA into naive host cells, maybe because the phage are less able to adsorb and inject their DNA into host cells. Its function is as follows. Expression of the Bil system in E.coli (strain MG1655) confers about 100-fold resistance to phage SECphi27, SECphi18, SECphi6, SECphi4 and T5, but not to SECphi17. When cells expressing the Bil system are infected by phage SECphi27 at low multiplicity of infection (0.03 MOI) the culture survives, at 3.0 MOI the culture collapses at the same time as cells without the Bil system. This is Bacterial ISG15-like ubiquitin-like protein BilA from Collimonas sp. (strain OK412).